Reading from the N-terminus, the 181-residue chain is Ferredoxin C 2, chloroplastic (181 aa).

A chloroplast-targeting transit peptide spans 1 to 44 (MALILPCTFCTSLQKKNFPINRRYITNFRRGATTATCEFRIPVE). One can recognise a 2Fe-2S ferredoxin-type domain in the interval 59 to 151 (HKVTVHDRQR…DLEVETQDED (93 aa)). [2Fe-2S] cluster-binding residues include cysteine 97, cysteine 102, cysteine 105, and cysteine 135.

It belongs to the 2Fe2S plant-type ferredoxin family. [2Fe-2S] cluster is required as a cofactor.

It localises to the plastid. The protein resides in the chloroplast. Its function is as follows. Ferredoxins are iron-sulfur proteins that transfer electrons in a wide variety of metabolic reactions. Mediates alternative electron partitioning in conditions of acceptor limitation at photosystem I. This chain is Ferredoxin C 2, chloroplastic, found in Arabidopsis thaliana (Mouse-ear cress).